Here is a 287-residue protein sequence, read N- to C-terminus: Orotidine 5'-phosphate decarboxylase (287 aa).

Lys97 serves as the catalytic Proton donor.

The protein belongs to the OMP decarboxylase family. Type 2 subfamily.

It catalyses the reaction orotidine 5'-phosphate + H(+) = UMP + CO2. It participates in pyrimidine metabolism; UMP biosynthesis via de novo pathway; UMP from orotate: step 2/2. This Clostridium perfringens (strain SM101 / Type A) protein is Orotidine 5'-phosphate decarboxylase.